Reading from the N-terminus, the 424-residue chain is ATP-dependent RNA helicase WM6 (424 aa).

Acidic residues predominate over residues 1 to 16 (MADNDDLLDYEDEEQT). Positions 1 to 27 (MADNDDLLDYEDEEQTETTAVENQEAP) are disordered. The Q motif signature appears at 41–69 (SGFRDFLLKPEILRAIVDCGFEHPSEVQH). One can recognise a Helicase ATP-binding domain in the interval 72–246 (IPQAVLGMDI…KKFMQDPMEV (175 aa)). 85-92 (AKSGMGKT) lines the ATP pocket. Residues 193–196 (DECD) carry the DECD box motif. The Helicase C-terminal domain occupies 258-419 (GLQQHYVNLK…ELPEEIDLST (162 aa)).

It belongs to the DEAD box helicase family. DECD subfamily. Component of the spliceosome. Interacts with the exon junction complex.

It localises to the nucleus speckle. The enzyme catalyses ATP + H2O = ADP + phosphate + H(+). Required for mRNA export out of the nucleus. Probable RNA helicase that may regulate entry into mitosis by down-regulating the expression of other genes whose activity may be rate-limiting for entry into mitosis during embryogenesis. Binds to salivary gland chromosomes and modifies position effect variegation. Promotes an open chromatin structure that favors transcription during development by regulating the spread of heterochromatin. The chain is ATP-dependent RNA helicase WM6 (Hel25E) from Drosophila melanogaster (Fruit fly).